The sequence spans 354 residues: 3-isopropylmalate dehydrogenase (354 aa).

76 to 87 lines the NAD(+) pocket; it reads GPRWDSAKERPE. Positions 94, 104, 130, and 215 each coordinate substrate. Aspartate 215, aspartate 239, and aspartate 243 together coordinate Mg(2+). An NAD(+)-binding site is contributed by 273-285; sequence GSAPDIAGKNKAN.

This sequence belongs to the isocitrate and isopropylmalate dehydrogenases family. LeuB type 1 subfamily. As to quaternary structure, homodimer. Requires Mg(2+) as cofactor. The cofactor is Mn(2+).

The protein localises to the cytoplasm. It catalyses the reaction (2R,3S)-3-isopropylmalate + NAD(+) = 4-methyl-2-oxopentanoate + CO2 + NADH. It participates in amino-acid biosynthesis; L-leucine biosynthesis; L-leucine from 3-methyl-2-oxobutanoate: step 3/4. In terms of biological role, catalyzes the oxidation of 3-carboxy-2-hydroxy-4-methylpentanoate (3-isopropylmalate) to 3-carboxy-4-methyl-2-oxopentanoate. The product decarboxylates to 4-methyl-2 oxopentanoate. The protein is 3-isopropylmalate dehydrogenase of Bacillus cereus (strain ATCC 10987 / NRS 248).